A 264-amino-acid polypeptide reads, in one-letter code: H-2 class II histocompatibility antigen, I-E beta chain (264 aa).

Positions 1–31 are cleaved as a signal peptide; sequence MVWLPRVPCVAAVILLLTVLSPPVALVRNSR. Residues 32–121 are beta-1; it reads PRFLEYSTSE…IFDNFLVPRR (90 aa). At 32-225 the chain is on the extracellular side; sequence PRFLEYSTSE…KAQSTSAQNK (194 aa). Disulfide bonds link cysteine 42–cysteine 106 and cysteine 144–cysteine 200. Asparagine 46 carries N-linked (GlcNAc...) asparagine glycosylation. A beta-2 region spans residues 122 to 215; it reads VEPTVTVYPT…SLTDPVTVEW (94 aa). In terms of domain architecture, Ig-like C1-type spans 124 to 214; that stretch reads PTVTVYPTKT…PSLTDPVTVE (91 aa). The connecting peptide stretch occupies residues 216 to 225; sequence KAQSTSAQNK. The helical transmembrane segment at 226–248 threads the bilayer; sequence MLSGVGGFVLGLLFLGAGLFIYF. Residues 249 to 264 lie on the Cytoplasmic side of the membrane; that stretch reads RNQKGQSGLQPTGLLS.

Belongs to the MHC class II family. Post-translationally, ubiquitinated in immature dendritic cells leading to down-regulation of MHC class II.

The protein resides in the membrane. This chain is H-2 class II histocompatibility antigen, I-E beta chain (H2-Eb1), found in Mus musculus (Mouse).